A 252-amino-acid polypeptide reads, in one-letter code: ATP synthase subunit a, chloroplastic (252 aa).

Helical transmembrane passes span 41–61 (GQVL…TLLA), 100–120 (VPFL…GALL), 138–158 (DINT…YAGI), 204–224 (LIVG…LMLL), and 225–245 (GVFT…AYIG).

It belongs to the ATPase A chain family. F-type ATPases have 2 components, CF(1) - the catalytic core - and CF(0) - the membrane proton channel. CF(1) has five subunits: alpha(3), beta(3), gamma(1), delta(1), epsilon(1). CF(0) has four main subunits: a, b, b' and c.

Its subcellular location is the plastid. The protein resides in the chloroplast thylakoid membrane. Key component of the proton channel; it plays a direct role in the translocation of protons across the membrane. The protein is ATP synthase subunit a, chloroplastic of Oedogonium cardiacum (Filamentous green alga).